Here is a 1155-residue protein sequence, read N- to C-terminus: PAN2-PAN3 deadenylation complex catalytic subunit pan2 (1155 aa).

WD repeat units lie at residues 102-145 and 276-315; these read THED…DKLP and ANVS…HFNE. Residues 316-452 are linker; it reads MSKEVEFADV…GTKLNGEAED (137 aa). In terms of domain architecture, USP spans 453-822; that stretch reads DPLLKYSNVE…VPCVLAYQVK (370 aa). The region spanning 871–1049 is the Exonuclease domain; it reads VALDTEFVDL…IEDARMALRL (179 aa). Positions 874, 876, 983, and 1042 each coordinate a divalent metal cation. Residues 1095–1155 form a disordered region; sequence TAVTMQNNSG…GDFFGGSPLK (61 aa). Polar residues predominate over residues 1097-1106; sequence VTMQNNSGRN. A compositionally biased stretch (low complexity) spans 1107–1124; the sequence is TPSTPEVTAPTASAPTTP.

The protein belongs to the peptidase C19 family. PAN2 subfamily. As to quaternary structure, forms a heterotrimer with an asymmetric homodimer of the regulatory subunit pan3 to form the poly(A)-nuclease (PAN) deadenylation complex. The cofactor is a divalent metal cation.

It is found in the cytoplasm. The catalysed reaction is Exonucleolytic cleavage of poly(A) to 5'-AMP.. Positively regulated by the regulatory subunit pan3. Its function is as follows. Catalytic subunit of the poly(A)-nuclease (PAN) deadenylation complex, one of two cytoplasmic mRNA deadenylases involved in mRNA turnover. PAN specifically shortens poly(A) tails of RNA and the activity is stimulated by poly(A)-binding protein pab1. PAN deadenylation is followed by rapid degradation of the shortened mRNA tails by the CCR4-NOT complex. Deadenylated mRNAs are then degraded by two alternative mechanisms, namely exosome-mediated 3'-5' exonucleolytic degradation, or deadenylation-dependent mRNA decaping and subsequent 5'-3' exonucleolytic degradation by xrn1. May also be involved in post-transcriptional maturation of mRNA poly(A) tails. The protein is PAN2-PAN3 deadenylation complex catalytic subunit pan2 of Aspergillus oryzae (strain ATCC 42149 / RIB 40) (Yellow koji mold).